A 316-amino-acid polypeptide reads, in one-letter code: Transcription initiation factor IIB (316 aa).

The TFIIB-type zinc finger occupies 11 to 42 (PKVTCPNHPDALLVEDYRAGDMICSECGLVVG). Residues C15, H18, C34, and C37 each contribute to the Zn(2+) site. Tandem repeats lie at residues 124 to 200 (MSDR…LILK) and 218 to 294 (FCSN…LIYP).

The protein belongs to the TFIIB family.

It localises to the nucleus. Its subcellular location is the chromosome. It carries out the reaction L-lysyl-[protein] + acetyl-CoA = N(6)-acetyl-L-lysyl-[protein] + CoA + H(+). Its function is as follows. General transcription factor that plays a role in transcription initiation by RNA polymerase II (Pol II). Involved in the pre-initiation complex (PIC) formation and Pol II recruitment at promoter DNA. Together with the TATA box-bound TBP forms the core initiation complex and provides a bridge between TBP and the Pol II-TFIIF complex. Released from the PIC early following the onset of transcription during the initiation and elongation transition and reassociates with TBP during the next transcription cycle. Associates with chromatin to core promoter-specific regions. Binds to two distinct DNA core promoter consensus sequence elements in a TBP-independent manner; these IIB-recognition elements (BREs) are localized immediately upstream (BREu), 5'-[GC][GC][GA]CGCC-3', and downstream (BREd), 5'-[GA]T[TGA][TG][GT][TG][TG]-3', of the TATA box element. Modulates transcription start site selection. Also exhibits autoacetyltransferase activity that contributes to the activated transcription. The protein is Transcription initiation factor IIB of Xenopus laevis (African clawed frog).